The following is a 198-amino-acid chain: Peptidyl-tRNA hydrolase (198 aa).

Tyrosine 17 serves as a coordination point for tRNA. Histidine 22 acts as the Proton acceptor in catalysis. TRNA contacts are provided by tyrosine 74, asparagine 76, and asparagine 122.

This sequence belongs to the PTH family. Monomer.

The protein resides in the cytoplasm. The enzyme catalyses an N-acyl-L-alpha-aminoacyl-tRNA + H2O = an N-acyl-L-amino acid + a tRNA + H(+). In terms of biological role, hydrolyzes ribosome-free peptidyl-tRNAs (with 1 or more amino acids incorporated), which drop off the ribosome during protein synthesis, or as a result of ribosome stalling. Its function is as follows. Catalyzes the release of premature peptidyl moieties from peptidyl-tRNA molecules trapped in stalled 50S ribosomal subunits, and thus maintains levels of free tRNAs and 50S ribosomes. The protein is Peptidyl-tRNA hydrolase of Kineococcus radiotolerans (strain ATCC BAA-149 / DSM 14245 / SRS30216).